We begin with the raw amino-acid sequence, 185 residues long: Ribosome-recycling factor (185 aa).

Residues 138–159 are disordered; the sequence is KVKKLEKDKEISEDESKKAQEQ.

This sequence belongs to the RRF family.

The protein resides in the cytoplasm. In terms of biological role, responsible for the release of ribosomes from messenger RNA at the termination of protein biosynthesis. May increase the efficiency of translation by recycling ribosomes from one round of translation to another. This Helicobacter acinonychis (strain Sheeba) protein is Ribosome-recycling factor.